A 55-amino-acid polypeptide reads, in one-letter code: uncharacterized protein (55 aa).

This is an uncharacterized protein from Homo sapiens (Human).